Here is a 728-residue protein sequence, read N- to C-terminus: Lutropin-choriogonadotropic hormone receptor (728 aa).

A signal peptide spans 1–19; that stretch reads MLPALLPLLLPALLPGAGG. The Extracellular segment spans residues 20-389; it reads GRCPQRCACT…DILGYSFLRV (370 aa). 6 LRR repeats span residues 92 to 116, 117 to 142, 144 to 166, 168 to 191, 193 to 215, and 216 to 239; these read LPAL…AFRN, LPRL…IFSS, AHFI…AFQG, SNES…AFNG, KLNQ…ALRG, and ATGP…GLEA. A helical transmembrane segment spans residues 390–410; sequence LIWFINILALAGNFIVLLVLI. At 411 to 420 the chain is on the cytoplasmic side; sequence TSHYKLTVPR. The chain crosses the membrane as a helical span at residues 421–441; sequence FLMCNLSFADFCMGLYLLLIA. Over 442 to 466 the chain is Extracellular; it reads SVDAQTSGQYYNHAIDWQTGSGCST. The cysteines at positions 464 and 539 are disulfide-linked. The chain crosses the membrane as a helical span at residues 467 to 487; sequence AGFFTVFASELSVYTLTVITI. Over 488 to 507 the chain is Cytoplasmic; sequence ERWHTITYAMQLDRKLRLRH. A helical transmembrane segment spans residues 508 to 528; sequence AVPIMLGGWVFSILIAVLPLL. Over 529–551 the chain is Extracellular; the sequence is GVSSYMKVSICLPMDIETGLSQA. The helical transmembrane segment at 552-572 threads the bilayer; that stretch reads YILLILMLNVIAFLVICACYI. Topologically, residues 573–595 are cytoplasmic; sequence KIYVAVQNPELVAANKDTKIAKR. The chain crosses the membrane as a helical span at residues 596–616; the sequence is MAILIFTDFTCMAPISFFAIS. Over 617 to 630 the chain is Extracellular; that stretch reads AAIKVPLITVTNSK. The helical transmembrane segment at 631-651 threads the bilayer; sequence ILLVLFYPVNSCANPFLYAIF. Over 652 to 728 the chain is Cytoplasmic; sequence TKAFQRDFFL…STKKSQPECQ (77 aa).

It belongs to the G-protein coupled receptor 1 family. FSH/LSH/TSH subfamily. Expressed in ovarian follicle granulosa cells. Expressed in ovarian follicle theca cells.

It localises to the cell membrane. Functionally, receptor for lutropin-choriogonadotropic hormone. The activity of this receptor is mediated by G proteins which activate adenylate cyclase. The chain is Lutropin-choriogonadotropic hormone receptor from Gallus gallus (Chicken).